We begin with the raw amino-acid sequence, 378 residues long: Ribosomal RNA large subunit methyltransferase G (378 aa).

Belongs to the methyltransferase superfamily. RlmG family.

The protein resides in the cytoplasm. The enzyme catalyses guanosine(1835) in 23S rRNA + S-adenosyl-L-methionine = N(2)-methylguanosine(1835) in 23S rRNA + S-adenosyl-L-homocysteine + H(+). In terms of biological role, specifically methylates the guanine in position 1835 (m2G1835) of 23S rRNA. In Shewanella baltica (strain OS195), this protein is Ribosomal RNA large subunit methyltransferase G.